Reading from the N-terminus, the 1035-residue chain is MDMDVMMISMCILASTLMAPGWASTSGFLRVPQSQSIVENEAADFGCEATDPASYLHYEWLHNGREISYDKRVYRIGSHLHIEAVQREEDVGDYVCIATSLASGAREASPPAKLSVIYLESASVQLLGSNRNELLLKCHVEGASGDEPLQIEWYRDSARLASWGNVHLEEHRLLVRQPSPSDDGLYRCTASNAAGRVMSKQGYVYQANIKCLPRLLKKNQKLPESWGKQTFLCRGKRGGSGGLDQALSPAPEDLRIVQGPAGQLLIKEGDSAALSCLYELPAELQNQRIQLRWRKDGKLLRHVELGGAIPIPGHAHDSGKDALLREDARLVLHKQNGTLSFASIIASDAGQYQCQLQLEGHAPLNSSPGLLEVIEQLKFVPQPTSKNLELDAAVAKVHCKAQGTPSPQVQWLREGSLNSSLPDQVEVDINGTLIFRNVRAEHRGNYTCQARSSQGQISATVSINVVVTPKFSVPPVGPIETTEQGTVVMHCQAIGDPKPTIQWDKDLKYLSENNTDRERFSFLENGTLEIRNVQVEDEGSYGCTIGNSAGLKREDVQLVVRSTGDGFAPEETGGDGFLVTRAVLITMTVALAYIVLVVGLMLWCRYRRQARKARLNELSIKEAGGDQPDASVTNGKGSEQEPCLSKQRNGASGKPKSKSNGDAQKSDDTACSQQSRSSKKSVYEQLVLPRSGLSELLQIGRGEFGDVFVGKLKASLVAASAQSDKDADTEKQHSNSENGSGGSGSGSGSTTLSTLNEKRRSKTSMDDIEEIKEEEPEQSALEQLVLVKALNKVKDEQACQEFRRQLDLLRGISHKGVVRLFGLCREKDPHYMVLEYTDWGDLKQFLLATAGKVNTATATSSPPALTTSQVLAVAYQIARGMDAIYRSRCTHRDLATRNCVISSEFVVKVSYPALCKDKYSREYHKHRNTLLPVRWLAPECIQEDEYTTKSDIFAYGVLVWELFNQATKLPHEELTSEQVIQRSQAGTLEWTVAEATPDSLKEILLSCWLANPKERPSFSQLGSALSKAMQSVAEK.

Positions 1–23 (MDMDVMMISMCILASTLMAPGWA) are cleaved as a signal peptide. Ig-like C2-type domains lie at 24–109 (STSG…REAS), 110–199 (PPAK…RVMS), 251–365 (PEDL…APLN), 368–464 (PGLL…VSIN), and 469–559 (PKFS…VQLV). At 24 to 582 (STSGFLRVPQ…GGDGFLVTRA (559 aa)) the chain is on the extracellular side. Cystine bridges form between Cys-47/Cys-96, Cys-138/Cys-188, Cys-276/Cys-354, Cys-399/Cys-448, and Cys-491/Cys-543. Residues Asn-336, Asn-418, Asn-430, Asn-445, Asn-513, and Asn-525 are each glycosylated (N-linked (GlcNAc...) asparagine). Residues 583-603 (VLITMTVALAYIVLVVGLMLW) traverse the membrane as a helical segment. The Cytoplasmic segment spans residues 604–1035 (CRYRRQARKA…SKAMQSVAEK (432 aa)). Disordered regions lie at residues 623 to 683 (AGGD…KSVY) and 721 to 775 (AQSD…KEEE). Over residues 658–676 (KSNGDAQKSDDTACSQQSR) the composition is skewed to polar residues. At Ser-681 the chain carries Phosphoserine. The region spanning 693 to 1029 (LSELLQIGRG…QLGSALSKAM (337 aa)) is the Protein kinase; inactive domain. Residues 723–734 (SDKDADTEKQHS) show a composition bias toward basic and acidic residues. The span at 766 to 775 (DDIEEIKEEE) shows a compositional bias: acidic residues.

Belongs to the protein kinase superfamily. Tyr protein kinase family. Insulin receptor subfamily. Interacts with plexA; component of a receptor complex that mediates the repulsive signaling in response to Semaphorin ligands.

The protein resides in the cell membrane. Acts as a calcium-dependent, homophilic cell adhesion molecule that regulates neural recognition during the development of the nervous system. Component of the repulsive Plexin signaling response to regulate motor axon guidance at the embryonic stage. Also component of a receptor complex that is required in the adult visual system to innervate the lamina layer; specific targeting of R1-R6 axons. The polypeptide is Tyrosine-protein kinase-like otk (Drosophila persimilis (Fruit fly)).